The chain runs to 69 residues: Neurotoxin Cex3 (69 aa).

A signal peptide is located at residue alanine 1. In terms of domain architecture, LCN-type CS-alpha/beta spans 2-67 (KDGYLVNKST…TYPLPNKSCG (66 aa)). 4 disulfide bridges follow: cysteine 13–cysteine 66, cysteine 17–cysteine 42, cysteine 26–cysteine 47, and cysteine 30–cysteine 49. The residue at position 66 (cysteine 66) is a Cysteine amide. The propeptide occupies 67 to 69 (GRK).

Belongs to the long (4 C-C) scorpion toxin superfamily. Sodium channel inhibitor family. Beta subfamily. As to expression, expressed by the venom gland.

It localises to the secreted. Its function is as follows. Beta toxins bind voltage-independently at site-4 of sodium channels (Nav) and shift the voltage of activation toward more negative potentials thereby affecting sodium channel activation and promoting spontaneous and repetitive firing. The protein is Neurotoxin Cex3 of Centruroides exilicauda (Bark scorpion).